Reading from the N-terminus, the 213-residue chain is ATP phosphoribosyltransferase (213 aa).

Belongs to the ATP phosphoribosyltransferase family. Short subfamily. As to quaternary structure, heteromultimer composed of HisG and HisZ subunits.

It localises to the cytoplasm. It catalyses the reaction 1-(5-phospho-beta-D-ribosyl)-ATP + diphosphate = 5-phospho-alpha-D-ribose 1-diphosphate + ATP. Its pathway is amino-acid biosynthesis; L-histidine biosynthesis; L-histidine from 5-phospho-alpha-D-ribose 1-diphosphate: step 1/9. Its function is as follows. Catalyzes the condensation of ATP and 5-phosphoribose 1-diphosphate to form N'-(5'-phosphoribosyl)-ATP (PR-ATP). Has a crucial role in the pathway because the rate of histidine biosynthesis seems to be controlled primarily by regulation of HisG enzymatic activity. In Shouchella clausii (strain KSM-K16) (Alkalihalobacillus clausii), this protein is ATP phosphoribosyltransferase.